Here is a 1761-residue protein sequence, read N- to C-terminus: MQFQLTLFLHLGWLSYSKAQDDCNRGACHPTTGDLLVGRNTQLMASSTCGLSRAQKYCILSYLEGEQKCFICDSRFPYDPYDQPNSHTIENVIVSFEPDREKKWWQSENGLDHVSIRLDLEALFRFSHLILTFKTFRPAAMLVERSTDYGHNWKVFKYFAKDCATSFPNITSGQAQGVGDIVCDSKYSDIEPSTGGEVVLKVLDPSFEIENPYSPYIQDLVTLTNLRINFTKLHTLGDALLGRRQNDSLDKYYYALYEMIVRGSCFCNGHASECRPMQKMRGDVFSPPGMVHGQCVCQHNTDGPNCERCKDFFQDAPWRPAADLQDNACRSCSCNSHSSRCHFDMTTYLASGGLSGGVCEDCQHNTEGQHCDRCRPLFYRDPLKTISDPYACIPCECDPDGTISGGICVSHSDPALGSVAGQCLCKENVEGAKCDQCKPNHYGLSATDPLGCQPCDCNPLGSLPFLTCDVDTGQCLCLSYVTGAHCEECTVGYWGLGNHLHGCSPCDCDIGGAYSNVCSPKNGQCECRPHVTGRSCSEPAPGYFFAPLNFYLYEAEEATTLQGLAPLGSETFGQSPAVHVVLGEPVPGNPVTWTGPGFARVLPGAGLRFAVNNIPFPVDFTIAIHYETQSAADWTVQIVVNPPGGSEHCIPKTLQSKPQSFALPAATRIMLLPTPICLEPDVQYSIDVYFSQPLQGESHAHSHVLVDSLGLIPQINSLENFCSKQDLDEYQLHNCVEIASAMGPQVLPGACERLIISMSAKLHDGAVACKCHPQGSVGSSCSRLGGQCQCKPLVVGRCCDRCSTGSYDLGHHGCHPCHCHPQGSKDTVCDQVTGQCPCHGEVSGRRCDRCLAGYFGFPSCHPCPCNRFAELCDPETGSCFNCGGFTTGRNCERCIDGYYGNPSSGQPCRPCLCPDDPSSNQYFAHSCYQNLWSSDVICNCLQGYTGTQCGECSTGFYGNPRISGAPCQPCACNNNIDVTDPESCSRVTGECLRCLHNTQGANCQLCKPGHYGSALNQTCRRCSCHASGVSPMECPPGGGACLCDPVTGACPCLPNVTGLACDRCADGYWNLVPGRGCQSCDCDPRTSQSSHCDQLTGQCPCKLGYGGKRCSECQENYYGDPPGRCIPCDCNRAGTQKPICDPDTGMCRCREGVSGQRCDRCARGHSQEFPTCLQCHLCFDQWDHTISSLSKAVQGLMRLAANMEDKRETLPVCEADFKDLRGNVSEIERILKHPVFPSGKFLKVKDYHDSVRRQIMQLNEQLKAVYEFQDLKDTIERAKNEADLLLEDLQEEIDLQSSVLNASIADSSENIKKYYHISSSAEKKINETSSTINTSANTRNDLLTILDTLTSKGNLSLERLKQIKIPDIQILNEKVCGDPGNVPCVPLPCGGALCTGRKGHRKCRGPGCHGSLTLSTNALQKAQEAKSIIRNLDKQVRGLKNQIESISEQAEVSKNNALQLREKLGNIRNQSDSEEENINLFIKKVKNFLLEENVPPEDIEKVANGVLDIHLPIPSQNLTDELVKIQKHMQLCEDYRTDENRLNEEADGAQKLLVKAKAAEKAANILLNLDKTLNQLQQAQITQGRANSTITQLTANITKIKKNVLQAENQTREMKSELELAKQRSGLEDGLSLLQTKLQRHQDHAVNAKVQAESAQHQAGSLEKEFVELKKQYAILQRKTSTTGLTKETLGKVKQLKDAAEKLAGDTEAKIRRITDLERKIQDLNLSRQAKADQLRILEDQVVAIKNEIVEQEKKYARCYS.

A signal peptide spans 1 to 19 (MQFQLTLFLHLGWLSYSKA). The region spanning 24–264 (NRGACHPTTG…ALYEMIVRGS (241 aa)) is the Laminin N-terminal domain. 3 N-linked (GlcNAc...) asparagine glycosylation sites follow: N169, N229, and N246. 19 disulfides stabilise this stretch: C265–C274, C267–C295, C297–C306, C309–C329, C332–C341, C334–C359, C362–C371, C374–C392, C395–C408, C397–C423, C425–C434, C437–C452, C455–C468, C457–C475, C477–C486, C489–C503, C506–C518, C508–C525, and C527–C536. 4 Laminin EGF-like domains span residues 265 to 331 (CFCN…ACRS), 332 to 394 (CSCN…ACIP), 395 to 454 (CECD…GCQP), and 455 to 505 (CDCN…GCSP). Residues 506–552 (CDCDIGGAYSNVCSPKNGQCECRPHVTGRSCSEPAPGYFFAPLNFYL) form the Laminin EGF-like 5; truncated domain. In terms of domain architecture, Laminin IV type B spans 545–763 (FAPLNFYLYE…LIISMSAKLH (219 aa)). Cystine bridges form between C769/C781, C771/C788, C790/C799, C802/C814, C817/C829, C819/C836, C838/C847, C850/C860, C863/C872, C865/C879, C882/C891, C894/C908, C913/C938, C940/C949, C952/C967, C970/C984, C972/C991, C994/C1003, C1006/C1019, C1022/C1043, C1024/C1050, C1052/C1061, C1064/C1077, C1080/C1092, C1082/C1099, C1101/C1110, C1113/C1125, C1128/C1140, C1130/C1147, C1149/C1158, and C1161/C1172. 8 Laminin EGF-like domains span residues 769-816 (CKCH…GCHP), 817-862 (CHCH…SCHP), 863-910 (CPCN…PCRP), 911-969 (CLCP…PCQP), 970-1021 (CACN…TCRR), 1022-1079 (CSCH…GCQS), 1080-1127 (CDCD…RCIP), and 1128-1174 (CDCN…TCLQ). A glycan (N-linked (GlcNAc...) asparagine) is linked at N1016. N-linked (GlcNAc...) asparagine glycosylation is present at N1055. The tract at residues 1175 to 1375 (CHLCFDQWDH…PDIQILNEKV (201 aa)) is domain II. 5 N-linked (GlcNAc...) asparagine glycosylation sites follow: N1223, N1301, N1326, N1333, and N1354. The stretch at 1243–1301 (KVKDYHDSVRRQIMQLNEQLKAVYEFQDLKDTIERAKNEADLLLEDLQEEIDLQSSVLN) forms a coiled coil. The tract at residues 1376 to 1408 (CGDPGNVPCVPLPCGGALCTGRKGHRKCRGPGC) is domain alpha. Positions 1409–1761 (HGSLTLSTNA…QEKKYARCYS (353 aa)) are domain I. Positions 1416–1480 (TNALQKAQEA…SDSEEENINL (65 aa)) form a coiled coil. Residues N1469, N1517, N1587, N1596, N1609, and N1725 are each glycosylated (N-linked (GlcNAc...) asparagine). Positions 1525–1759 (IQKHMQLCED…VEQEKKYARC (235 aa)) form a coiled coil.

As to quaternary structure, laminin is a complex glycoprotein, consisting of three different polypeptide chains (alpha, beta, gamma), which are bound to each other by disulfide bonds into a cross-shaped molecule comprising one long and three short arms with globules at each end.

It is found in the secreted. The protein resides in the extracellular space. It localises to the extracellular matrix. The protein localises to the basement membrane. Binding to cells via a high affinity receptor, laminin is thought to mediate the attachment, migration and organization of cells into tissues during embryonic development by interacting with other extracellular matrix components. This is Laminin subunit beta-4 (LAMB4) from Homo sapiens (Human).